We begin with the raw amino-acid sequence, 218 residues long: Nuclear cap-binding protein subunit 2 (218 aa).

MRNA contacts are provided by residues Y24, Y49, 118–122 (TIDLD), 129–133 (RQFGR), and 139–140 (QV). Positions 46–124 (ATIYVGNLSF…REITIDLDPG (79 aa)) constitute an RRM domain. A compositionally biased stretch (basic residues) spans 176–194 (DPHKNHHHHHHGHHHHHGQ). The disordered stretch occupies residues 176 to 200 (DPHKNHHHHHHGHHHHHGQPHAAAA).

This sequence belongs to the RRM NCBP2 family. As to quaternary structure, component of the nuclear cap-binding complex (CBC).

Its subcellular location is the nucleus. In terms of biological role, component of the cap-binding complex (CBC) involved in the nuclear export of capped U snRNAs. The CBC complex is required for efficient pre-mRNA splicing through efficient commitment complex and spliceosome formation; and involved in rRNA processing at sites A0, A1 and A2. The polypeptide is Nuclear cap-binding protein subunit 2 (CBC2) (Eremothecium gossypii (strain ATCC 10895 / CBS 109.51 / FGSC 9923 / NRRL Y-1056) (Yeast)).